We begin with the raw amino-acid sequence, 213 residues long: Putative 3-methyladenine DNA glycosylase (213 aa).

The protein belongs to the DNA glycosylase MPG family.

This is Putative 3-methyladenine DNA glycosylase from Paraburkholderia phytofirmans (strain DSM 17436 / LMG 22146 / PsJN) (Burkholderia phytofirmans).